Consider the following 163-residue polypeptide: uncharacterized protein (163 aa).

This is an uncharacterized protein from Rickettsia prowazekii (strain Madrid E).